The chain runs to 456 residues: MSNSSMSVVILAAGKGTRMYSDLPKVLHPLAGKPMVQHVIDAAMKLGAQHVHLVYGHGGELLKKTLADPSLNWVLQAEQLGTGHAMQQAAPHFADDEDILMLYGDVPLISVDTLQRLLAAKPEGGIGLLTVKLDNPSGYGRIVRENGDVVGIVEHKDASDAQREINEINTGILVANGRDLKRWLSLLDNNNAQGEFYITDIIALAHADGKKIATVHPTRLSEVEGVNNRLQLSALERVFQTEQAEKLLLAGVMLLDPSRFDLRGELTHGRDITIDTNVIIEGHVILGDRVRIGTGCVLKNCVIGDDSEISPYTVLEDARLDANCTVGPFARLRPGAELAEGAHVGNFVEIKKARLGKGSKAGHLSYLGDAEIGAGVNIGAGTITCNYDGANKFKTIIGDDVFVGSDTQLVAPVTVANGATIGAGTTVTRDVAENELVISRVKQVHIQGWKRPVKKK.

The interval 1–229 is pyrophosphorylase; that stretch reads MSNSSMSVVI…LSEVEGVNNR (229 aa). Residues 11 to 14, K25, Q76, 81 to 82, 103 to 105, G140, E154, N169, and N227 contribute to the UDP-N-acetyl-alpha-D-glucosamine site; these read LAAG, GT, and YGD. D105 contributes to the Mg(2+) binding site. Residue N227 coordinates Mg(2+). The interval 230–250 is linker; that stretch reads LQLSALERVFQTEQAEKLLLA. The segment at 251 to 456 is N-acetyltransferase; it reads GVMLLDPSRF…QGWKRPVKKK (206 aa). R333 and K351 together coordinate UDP-N-acetyl-alpha-D-glucosamine. H363 serves as the catalytic Proton acceptor. Residues Y366 and N377 each coordinate UDP-N-acetyl-alpha-D-glucosamine. Acetyl-CoA is bound by residues A380, 386 to 387, S405, A423, and R440; that span reads NY.

The protein in the N-terminal section; belongs to the N-acetylglucosamine-1-phosphate uridyltransferase family. It in the C-terminal section; belongs to the transferase hexapeptide repeat family. Homotrimer. Mg(2+) is required as a cofactor.

It is found in the cytoplasm. The catalysed reaction is alpha-D-glucosamine 1-phosphate + acetyl-CoA = N-acetyl-alpha-D-glucosamine 1-phosphate + CoA + H(+). It carries out the reaction N-acetyl-alpha-D-glucosamine 1-phosphate + UTP + H(+) = UDP-N-acetyl-alpha-D-glucosamine + diphosphate. Its pathway is nucleotide-sugar biosynthesis; UDP-N-acetyl-alpha-D-glucosamine biosynthesis; N-acetyl-alpha-D-glucosamine 1-phosphate from alpha-D-glucosamine 6-phosphate (route II): step 2/2. It functions in the pathway nucleotide-sugar biosynthesis; UDP-N-acetyl-alpha-D-glucosamine biosynthesis; UDP-N-acetyl-alpha-D-glucosamine from N-acetyl-alpha-D-glucosamine 1-phosphate: step 1/1. It participates in bacterial outer membrane biogenesis; LPS lipid A biosynthesis. In terms of biological role, catalyzes the last two sequential reactions in the de novo biosynthetic pathway for UDP-N-acetylglucosamine (UDP-GlcNAc). The C-terminal domain catalyzes the transfer of acetyl group from acetyl coenzyme A to glucosamine-1-phosphate (GlcN-1-P) to produce N-acetylglucosamine-1-phosphate (GlcNAc-1-P), which is converted into UDP-GlcNAc by the transfer of uridine 5-monophosphate (from uridine 5-triphosphate), a reaction catalyzed by the N-terminal domain. The polypeptide is Bifunctional protein GlmU (Yersinia pseudotuberculosis serotype O:1b (strain IP 31758)).